We begin with the raw amino-acid sequence, 373 residues long: Queuine tRNA-ribosyltransferase (373 aa).

The active-site Proton acceptor is Asp-90. Substrate contacts are provided by residues 90 to 94 (DSGGF), Asp-144, Gln-193, and Gly-220. Positions 251–257 (GVGTPED) are RNA binding. The active-site Nucleophile is Asp-270. The interval 275-279 (TRNAR) is RNA binding; important for wobble base 34 recognition. Positions 308, 310, 313, and 339 each coordinate Zn(2+).

Belongs to the queuine tRNA-ribosyltransferase family. As to quaternary structure, homodimer. Within each dimer, one monomer is responsible for RNA recognition and catalysis, while the other monomer binds to the replacement base PreQ1. It depends on Zn(2+) as a cofactor.

It catalyses the reaction 7-aminomethyl-7-carbaguanine + guanosine(34) in tRNA = 7-aminomethyl-7-carbaguanosine(34) in tRNA + guanine. It functions in the pathway tRNA modification; tRNA-queuosine biosynthesis. In terms of biological role, catalyzes the base-exchange of a guanine (G) residue with the queuine precursor 7-aminomethyl-7-deazaguanine (PreQ1) at position 34 (anticodon wobble position) in tRNAs with GU(N) anticodons (tRNA-Asp, -Asn, -His and -Tyr). Catalysis occurs through a double-displacement mechanism. The nucleophile active site attacks the C1' of nucleotide 34 to detach the guanine base from the RNA, forming a covalent enzyme-RNA intermediate. The proton acceptor active site deprotonates the incoming PreQ1, allowing a nucleophilic attack on the C1' of the ribose to form the product. After dissociation, two additional enzymatic reactions on the tRNA convert PreQ1 to queuine (Q), resulting in the hypermodified nucleoside queuosine (7-(((4,5-cis-dihydroxy-2-cyclopenten-1-yl)amino)methyl)-7-deazaguanosine). This is Queuine tRNA-ribosyltransferase from Campylobacter jejuni subsp. jejuni serotype O:2 (strain ATCC 700819 / NCTC 11168).